A 410-amino-acid chain; its full sequence is NADH-quinone oxidoreductase subunit D (410 aa).

Belongs to the complex I 49 kDa subunit family. NDH-1 is composed of 14 different subunits. Subunits NuoB, C, D, E, F, and G constitute the peripheral sector of the complex.

It is found in the cell inner membrane. It carries out the reaction a quinone + NADH + 5 H(+)(in) = a quinol + NAD(+) + 4 H(+)(out). In terms of biological role, NDH-1 shuttles electrons from NADH, via FMN and iron-sulfur (Fe-S) centers, to quinones in the respiratory chain. The immediate electron acceptor for the enzyme in this species is believed to be ubiquinone. Couples the redox reaction to proton translocation (for every two electrons transferred, four hydrogen ions are translocated across the cytoplasmic membrane), and thus conserves the redox energy in a proton gradient. This chain is NADH-quinone oxidoreductase subunit D, found in Nitratiruptor sp. (strain SB155-2).